The primary structure comprises 128 residues: MSEGGGRVSRIFAAPTRLCRWPALIECGVNLTQPLCEWMIQVARDRTLSLAWEVASLLTLSSSEVGLEGVGTIWPSSYSSEESSRNGAEQGRQLSIEGPFQGQNCPSHPAAALPLPMRGESQATSCQV.

A disordered region spans residues 77–128 (SYSSEESSRNGAEQGRQLSIEGPFQGQNCPSHPAAALPLPMRGESQATSCQV).

As to quaternary structure, interacts with PRDX6.

The protein localises to the cytoplasm. It is found in the nucleus. This is Saitohin (STH) from Gorilla gorilla gorilla (Western lowland gorilla).